Here is a 354-residue protein sequence, read N- to C-terminus: Myosin-binding protein H-like (354 aa).

Residues 1–47 form a disordered region; that stretch reads MEAATAPEVAAGSKLKVKEASPADAEPPQASPGQGAGSPTPQLLPPI. The residue at position 38 (serine 38) is a Phosphoserine. Positions 45 to 139 constitute an Ig-like C2-type 1 domain; sequence PPIEEHPKIW…GGLEATATID (95 aa). Residues 148-238 enclose the Fibronectin type-III domain; it reads PPQSIKLVDV…ETAPITTDLA (91 aa). Positions 261-345 constitute an Ig-like C2-type 2 domain; sequence PKFTQPLADC…VNPLGEASVD (85 aa). A disulfide bond links cysteine 282 and cysteine 333. Omega-N-methylarginine is present on arginine 321.

Belongs to the immunoglobulin superfamily. MyBP family. Expressed in heart, with higher expression in the atria. As to expression, expressed in left atrium and ventricle, arteria mammaria interna and skeletal muscle. In terms of tissue distribution, expressed specifically en the left atrium.

The protein resides in the cytoplasm. It is found in the myofibril. Its subcellular location is the sarcomere. Its function is as follows. Myosin-binding protein which plays a role in cardiac function. Seems to regulate conduction in the atria and ventricular conduction systems. This is Myosin-binding protein H-like from Homo sapiens (Human).